The primary structure comprises 284 residues: RNase adapter protein RapZ (284 aa).

Residue 8-15 (GRSGSGKS) coordinates ATP. 56-59 (DVRN) contributes to the GTP binding site. The segment at 266–284 (RSRGKNVQSRHRTLEKRKP) is RNA-binding.

The protein belongs to the RapZ-like family. RapZ subfamily. In terms of assembly, homotrimer.

Functionally, modulates the synthesis of GlmS, by affecting the processing and stability of the regulatory small RNA GlmZ. When glucosamine-6-phosphate (GlcN6P) concentrations are high in the cell, RapZ binds GlmZ and targets it to cleavage by RNase E. Consequently, GlmZ is inactivated and unable to activate GlmS synthesis. Under low GlcN6P concentrations, RapZ is sequestered and inactivated by an other regulatory small RNA, GlmY, preventing GlmZ degradation and leading to synthesis of GlmS. In Shigella boydii serotype 18 (strain CDC 3083-94 / BS512), this protein is RNase adapter protein RapZ.